Consider the following 710-residue polypeptide: Polyribonucleotide nucleotidyltransferase (710 aa).

Asp489 and Asp495 together coordinate Mg(2+). Residues 556-615 (PKIDTIKIDVDKIKVVIGKGGETIDKIIAETGVKIDIDDEGNVSIYSSDQAAINRTKEII) enclose the KH domain. The S1 motif domain maps to 625–693 (GEVYHAKVVR…EKGRVDASMK (69 aa)). The segment at 691–710 (SMKALIPRPPKPEKKEEKHD) is disordered. Positions 700–710 (PKPEKKEEKHD) are enriched in basic and acidic residues.

Requires Mg(2+) as cofactor.

Its subcellular location is the cytoplasm. It carries out the reaction RNA(n+1) + phosphate = RNA(n) + a ribonucleoside 5'-diphosphate. Involved in mRNA degradation. Catalyzes the phosphorolysis of single-stranded polyribonucleotides processively in the 3'- to 5'-direction. The chain is Polyribonucleotide nucleotidyltransferase from Streptococcus pyogenes serotype M6 (strain ATCC BAA-946 / MGAS10394).